Reading from the N-terminus, the 184-residue chain is ATP synthase subunit delta (184 aa).

The protein belongs to the ATPase delta chain family. In terms of assembly, F-type ATPases have 2 components, F(1) - the catalytic core - and F(0) - the membrane proton channel. F(1) has five subunits: alpha(3), beta(3), gamma(1), delta(1), epsilon(1). F(0) has three main subunits: a(1), b(2) and c(10-14). The alpha and beta chains form an alternating ring which encloses part of the gamma chain. F(1) is attached to F(0) by a central stalk formed by the gamma and epsilon chains, while a peripheral stalk is formed by the delta and b chains.

It localises to the cell membrane. F(1)F(0) ATP synthase produces ATP from ADP in the presence of a proton or sodium gradient. F-type ATPases consist of two structural domains, F(1) containing the extramembraneous catalytic core and F(0) containing the membrane proton channel, linked together by a central stalk and a peripheral stalk. During catalysis, ATP synthesis in the catalytic domain of F(1) is coupled via a rotary mechanism of the central stalk subunits to proton translocation. Its function is as follows. This protein is part of the stalk that links CF(0) to CF(1). It either transmits conformational changes from CF(0) to CF(1) or is implicated in proton conduction. This Bacillus licheniformis (strain ATCC 14580 / DSM 13 / JCM 2505 / CCUG 7422 / NBRC 12200 / NCIMB 9375 / NCTC 10341 / NRRL NRS-1264 / Gibson 46) protein is ATP synthase subunit delta.